Here is a 151-residue protein sequence, read N- to C-terminus: Large ribosomal subunit protein bL9 (151 aa).

It belongs to the bacterial ribosomal protein bL9 family.

In terms of biological role, binds to the 23S rRNA. This chain is Large ribosomal subunit protein bL9, found in Pelobacter propionicus (strain DSM 2379 / NBRC 103807 / OttBd1).